Reading from the N-terminus, the 290-residue chain is Programmed cell death 1 ligand 1 (290 aa).

Positions 1-18 are cleaved as a signal peptide; sequence MRIFAGIIFTACCHLLRA. The Ig-like V-type domain occupies 19 to 127; it reads FTITAPKDLY…YGGADYKRIT (109 aa). Residues 19–239 are Extracellular-facing; sequence FTITAPKDLY…ATHPPQNRTH (221 aa). The N-linked (GlcNAc...) asparagine glycan is linked to Asn35. Cystine bridges form between Cys40–Cys114 and Cys154–Cys208. One can recognise an Ig-like C2-type domain in the interval 133 to 224; it reads PYRKINQRIS…PGQNHTAELI (92 aa). 4 N-linked (GlcNAc...) asparagine glycosylation sites follow: Asn191, Asn199, Asn218, and Asn236. The chain crosses the membrane as a helical span at residues 240–260; the sequence is WVLLGSILLFLIVVSTVLLFL. Residues 261–290 are Cytoplasmic-facing; the sequence is RKQVRMLDVEKCGVEDTSSKNRNDTQFEET.

It belongs to the immunoglobulin superfamily. BTN/MOG family. In terms of assembly, interacts with PDCD1. Interacts with CMTM4 and CMTM6. Interacts with CD80. In terms of processing, ubiquitinated; STUB1 likely mediates polyubiquitination of PD-L1/CD274 triggering its degradation. Ubiquitinated by MARCHF8; leading to degradation. Deubiquitinated by USP22; leading to stabilization. In terms of tissue distribution, highly expressed in the heart, thymus, skeletal muscle, and lung. Weakly expressed in the kidney, spleen, thyroid, and liver. Expressed on activated dendritic cells, B-cells and macrophages. Expressed in numerous tumor cells lines of lymphoid origin.

It is found in the cell membrane. Its subcellular location is the early endosome membrane. The protein localises to the recycling endosome membrane. Functionally, plays a critical role in induction and maintenance of immune tolerance to self. As a ligand for the inhibitory receptor PDCD1/PD-1, modulates the activation threshold of T-cells and limits T-cell effector response. Through a yet unknown activating receptor, may costimulate T-cell subsets that predominantly produce interleukin-10 (IL10). Its function is as follows. The PDCD1-mediated inhibitory pathway is exploited by tumors to attenuate anti-tumor immunity and escape destruction by the immune system, thereby facilitating tumor survival. The interaction with PDCD1/PD-1 inhibits cytotoxic T lymphocytes (CTLs) effector function. The blockage of the PDCD1-mediated pathway results in the reversal of the exhausted T-cell phenotype and the normalization of the anti-tumor response, providing a rationale for cancer immunotherapy. This is Programmed cell death 1 ligand 1 (Cd274) from Mus musculus (Mouse).